We begin with the raw amino-acid sequence, 220 residues long: MRERNAAGIGMTSQRTRDRLVDALAAQGIQDERVLSAMREVPRHLFVDEALESRAYENTPLPIGEGQTISQPWVVARMTELLLEPGVPERVLEVGTGSGYQAAVLARLVPRVYSIERIGSLLRRARERLQAVRLFNCQLRHGDGYEGWPEYAPYDGIIVTAAPDALPEALLEQLADGGRLVAPIGGAGYQELLVVDRRGDAYEQRRVAGVSFVPMLEGRV.

Residue Ser70 is part of the active site.

Belongs to the methyltransferase superfamily. L-isoaspartyl/D-aspartyl protein methyltransferase family.

It localises to the cytoplasm. The catalysed reaction is [protein]-L-isoaspartate + S-adenosyl-L-methionine = [protein]-L-isoaspartate alpha-methyl ester + S-adenosyl-L-homocysteine. Catalyzes the methyl esterification of L-isoaspartyl residues in peptides and proteins that result from spontaneous decomposition of normal L-aspartyl and L-asparaginyl residues. It plays a role in the repair and/or degradation of damaged proteins. In Halorhodospira halophila (strain DSM 244 / SL1) (Ectothiorhodospira halophila (strain DSM 244 / SL1)), this protein is Protein-L-isoaspartate O-methyltransferase.